The primary structure comprises 211 residues: Redox-sensing transcriptional repressor Rex (211 aa).

Residues 17 to 56 (LYYRFVSSLKSKGIDRVNSKAISDALQIDSATIRRDFSYF) constitute a DNA-binding region (H-T-H motif). 91 to 96 (GVGNLG) lines the NAD(+) pocket.

It belongs to the transcriptional regulatory Rex family. In terms of assembly, homodimer.

It localises to the cytoplasm. Modulates transcription in response to changes in cellular NADH/NAD(+) redox state. This Staphylococcus aureus (strain Mu3 / ATCC 700698) protein is Redox-sensing transcriptional repressor Rex.